A 695-amino-acid chain; its full sequence is Polyribonucleotide nucleotidyltransferase (695 aa).

Mg(2+)-binding residues include Asp-486 and Asp-492. Residues Pro-553 to Ile-612 enclose the KH domain. The S1 motif domain occupies Gly-622 to Lys-690.

It belongs to the polyribonucleotide nucleotidyltransferase family. The cofactor is Mg(2+).

It localises to the cytoplasm. It catalyses the reaction RNA(n+1) + phosphate = RNA(n) + a ribonucleoside 5'-diphosphate. Involved in mRNA degradation. Catalyzes the phosphorolysis of single-stranded polyribonucleotides processively in the 3'- to 5'-direction. The chain is Polyribonucleotide nucleotidyltransferase from Chlamydia trachomatis serovar L2 (strain ATCC VR-902B / DSM 19102 / 434/Bu).